A 157-amino-acid chain; its full sequence is SUMO-conjugating enzyme UBC9-B (157 aa).

Residues 4-157 (IALSRLAQER…VRAQAKKFSP (154 aa)) enclose the UBC core domain. An interaction with SUMO1 region spans residues 13–18 (RKAWRK). The active-site Glycyl thioester intermediate is Cys-93.

This sequence belongs to the ubiquitin-conjugating enzyme family. In terms of assembly, forms a tight complex with rangap1 and ranbp2. Interacts with vsx1.

It is found in the nucleus. The protein operates within protein modification; protein sumoylation. Functionally, accepts the ubiquitin-like proteins sumo1, sumo2 and sumo3 from the uble1a-uble1b E1 complex and catalyzes their covalent attachment to other proteins with the help of an E3 ligase such as ranbp2 or cbx4. Essential for nuclear architecture and chromosome segregation. Mediates nuclear localization of vsx1. Required for progression through mitosis during organogenesis. The chain is SUMO-conjugating enzyme UBC9-B (ube2ib) from Danio rerio (Zebrafish).